Reading from the N-terminus, the 120-residue chain is Large ribosomal subunit protein bL20 (120 aa).

This sequence belongs to the bacterial ribosomal protein bL20 family.

In terms of biological role, binds directly to 23S ribosomal RNA and is necessary for the in vitro assembly process of the 50S ribosomal subunit. It is not involved in the protein synthesizing functions of that subunit. This is Large ribosomal subunit protein bL20 from Xanthobacter autotrophicus (strain ATCC BAA-1158 / Py2).